A 321-amino-acid chain; its full sequence is MAVARHGYRPWGSILGLLGLALAAAAAWDVASLRCTFGSFCECDFWPDLPGLECDLAQHLAGQHLAKALVVKSLKAFVQDPAPSKPLVLSLHGWTGTGKSYVSSLLAQHLFRDGLRSPHVHHFSPIIHFPHPSRTEQYKKELKSWVQGNLTACGRSLFLFDEMDKLPPGLMEVLQPFLGPSWVVYGTNYRKAIFIFISNAGGEQINQVALEAWRSHRDREEISLQEVEPVISRAVMDNPQHGFWRSGIMEEHLLDAVVPFLPLQRHHVRHCVLNELAQLGLEPSEEVVQAVLDSTTYFPEVEQLFSSNGCKTVASRLTFFL.

An N-terminal signal peptide occupies residues 1–26; it reads MAVARHGYRPWGSILGLLGLALAAAA. Residue 93–100 participates in ATP binding; it reads GWTGTGKS. Asn149 carries an N-linked (GlcNAc...) asparagine glycan.

This sequence belongs to the ClpA/ClpB family. Torsin subfamily. As to quaternary structure, homohexamer. Interacts with TOR1AIP1. Post-translationally, N-glycosylated. Expressed at similar levels in liver, muscle and brain (at protein level).

It is found in the endoplasmic reticulum lumen. The sequence is that of Torsin-2A (Tor2a) from Mus musculus (Mouse).